We begin with the raw amino-acid sequence, 607 residues long: Elongation factor 4 (607 aa).

One can recognise a tr-type G domain in the interval 11-193 (ENIRNFSIIA…KIVEVVPAPD (183 aa)). Residues 23–28 (DHGKST) and 140–143 (NKID) each bind GTP.

This sequence belongs to the TRAFAC class translation factor GTPase superfamily. Classic translation factor GTPase family. LepA subfamily.

It localises to the cell membrane. The enzyme catalyses GTP + H2O = GDP + phosphate + H(+). Required for accurate and efficient protein synthesis under certain stress conditions. May act as a fidelity factor of the translation reaction, by catalyzing a one-codon backward translocation of tRNAs on improperly translocated ribosomes. Back-translocation proceeds from a post-translocation (POST) complex to a pre-translocation (PRE) complex, thus giving elongation factor G a second chance to translocate the tRNAs correctly. Binds to ribosomes in a GTP-dependent manner. The sequence is that of Elongation factor 4 from Staphylococcus aureus (strain USA300).